The primary structure comprises 472 residues: Glutamate--tRNA ligase (472 aa).

The 'HIGH' region signature appears at 10–20 (PSPTGYLHVGG). Cysteine 99, cysteine 101, cysteine 126, and aspartate 128 together coordinate Zn(2+). The short motif at 238-242 (KLSKR) is the 'KMSKS' region element. Lysine 241 serves as a coordination point for ATP.

Belongs to the class-I aminoacyl-tRNA synthetase family. Glutamate--tRNA ligase type 1 subfamily. Monomer. The cofactor is Zn(2+).

The protein localises to the cytoplasm. The enzyme catalyses tRNA(Glu) + L-glutamate + ATP = L-glutamyl-tRNA(Glu) + AMP + diphosphate. Functionally, catalyzes the attachment of glutamate to tRNA(Glu) in a two-step reaction: glutamate is first activated by ATP to form Glu-AMP and then transferred to the acceptor end of tRNA(Glu). In Photorhabdus laumondii subsp. laumondii (strain DSM 15139 / CIP 105565 / TT01) (Photorhabdus luminescens subsp. laumondii), this protein is Glutamate--tRNA ligase.